The following is a 61-amino-acid chain: Alpha-conotoxine-like Am1.4 (61 aa).

The N-terminal stretch at 1–21 is a signal peptide; that stretch reads MGMRMMFTVFLLVVLATTVVS. Positions 22-44 are excised as a propeptide; sequence FMSGRASHGRNAAASDLIALTIK.

The protein belongs to the conotoxin A superfamily. Post-translationally, is not hydroxylated. In terms of processing, contains 2 disulfide bonds. Expressed by the venom duct.

Its subcellular location is the secreted. Its function is as follows. Alpha-conotoxins act on postsynaptic membranes, they bind to the nicotinic acetylcholine receptors (nAChR) and thus inhibit them. The sequence is that of Alpha-conotoxine-like Am1.4 from Conus amadis (Amadis cone).